A 509-amino-acid polypeptide reads, in one-letter code: Photosystem II CP47 reaction center protein (509 aa).

Transmembrane regions (helical) follow at residues 21 to 36 (SVHL…WAGS), 101 to 115 (IVLS…IWHW), 140 to 156 (GIHL…FGAF), 203 to 218 (IAAG…FHLN), 237 to 252 (VLSS…SFVV), and 457 to 472 (NFAL…HGSR).

It belongs to the PsbB/PsbC family. PsbB subfamily. PSII is composed of 1 copy each of membrane proteins PsbA, PsbB, PsbC, PsbD, PsbE, PsbF, PsbH, PsbI, PsbJ, PsbK, PsbL, PsbM, PsbT, PsbY, PsbZ, Psb30/Ycf12, at least 3 peripheral proteins of the oxygen-evolving complex and a large number of cofactors. It forms dimeric complexes. It depends on Binds multiple chlorophylls. PSII binds additional chlorophylls, carotenoids and specific lipids. as a cofactor.

The protein localises to the plastid. The protein resides in the chloroplast thylakoid membrane. Its function is as follows. One of the components of the core complex of photosystem II (PSII). It binds chlorophyll and helps catalyze the primary light-induced photochemical processes of PSII. PSII is a light-driven water:plastoquinone oxidoreductase, using light energy to abstract electrons from H(2)O, generating O(2) and a proton gradient subsequently used for ATP formation. This Cyanidium caldarium (Red alga) protein is Photosystem II CP47 reaction center protein.